The primary structure comprises 200 residues: Rho GDP-dissociation inhibitor 2 (200 aa).

The disordered stretch occupies residues 1–40; the sequence is MTEKAPEPHVEEDDDELDGKLNYKPPPQKSLKELQEMDKD. At Thr2 the chain carries N-acetylthreonine. Position 20 is an N6-acetyllysine (Lys20). The residue at position 23 (Tyr23) is a Phosphotyrosine. Residues Lys24, Lys39, Lys46, Lys101, and Lys123 each carry the N6-acetyllysine modification. A compositionally biased stretch (basic and acidic residues) spans 30–40; that stretch reads SLKELQEMDKD. Phosphoserine is present on Ser144. Lys174 carries the N6-acetyllysine modification.

Belongs to the Rho GDI family. In terms of assembly, interacts with RHOA. Interacts with RAC1. Interacts with RAC2. Interacts with CDC42.

Its subcellular location is the cytoplasm. It localises to the cytosol. Functionally, regulates the GDP/GTP exchange reaction of the Rho proteins by inhibiting the dissociation of GDP from them, and the subsequent binding of GTP to them. Regulates reorganization of the actin cytoskeleton mediated by Rho family members. The chain is Rho GDP-dissociation inhibitor 2 (ARHGDIB) from Bos taurus (Bovine).